The primary structure comprises 179 residues: ECF RNA polymerase sigma factor SigF (179 aa).

Positions 33–93 (RLRAYFMRRM…KLIDHWRRRK (61 aa)) are sigma-70 factor domain-2. Positions 51-64 (DLVQETLLAVHLKR) match the Polymerase core binding motif. The interval 123 to 170 (ALASLPQRQRMLVSDVKLTGLSLAEAGARAGISEGAAKVALHRALKAL) is sigma-70 factor domain-4. Residues 145-164 (LAEAGARAGISEGAAKVALH) constitute a DNA-binding region (H-T-H motif).

This sequence belongs to the sigma-70 factor family. ECF subfamily.

Its subcellular location is the cytoplasm. Its function is as follows. Sigma factors are initiation factors that promote the attachment of RNA polymerase to specific initiation sites and are then released. Extracytoplasmic function (ECF) sigma factors are held in an inactive form by a cognate anti-sigma factor (NrsF in this case) until they are released. Up-regulates expression of 4 operons (sigF-nrsF, CCNA_02834, CCNA_03001 to CCNA_02999 and CCNA_03363 to CCNA_03366) in response to potassium dichromate (K(2)Cr(2)O(7)) or cadmium chloride (CdCl(2)). Overexpression of sigF leads to higher expression of its regulon. The protein is ECF RNA polymerase sigma factor SigF of Caulobacter vibrioides (strain NA1000 / CB15N) (Caulobacter crescentus).